Consider the following 494-residue polypeptide: UPF0371 protein STER_1332 (494 aa).

Belongs to the UPF0371 family.

The chain is UPF0371 protein STER_1332 from Streptococcus thermophilus (strain ATCC BAA-491 / LMD-9).